The following is a 394-amino-acid chain: 1-deoxy-D-xylulose 5-phosphate reductoisomerase (394 aa).

The NADPH site is built by Thr-10, Gly-11, Ser-12, Ile-13, Gly-38, Arg-39, Asn-40, and Asn-123. A 1-deoxy-D-xylulose 5-phosphate-binding site is contributed by Lys-124. Glu-125 contributes to the NADPH binding site. Residue Asp-149 participates in Mn(2+) binding. 1-deoxy-D-xylulose 5-phosphate is bound by residues Ser-150, Glu-151, Ser-175, and His-198. A Mn(2+)-binding site is contributed by Glu-151. Gly-204 contacts NADPH. Positions 211, 216, 217, and 220 each coordinate 1-deoxy-D-xylulose 5-phosphate. Glu-220 serves as a coordination point for Mn(2+).

Belongs to the DXR family. It depends on Mg(2+) as a cofactor. Mn(2+) is required as a cofactor.

It carries out the reaction 2-C-methyl-D-erythritol 4-phosphate + NADP(+) = 1-deoxy-D-xylulose 5-phosphate + NADPH + H(+). It participates in isoprenoid biosynthesis; isopentenyl diphosphate biosynthesis via DXP pathway; isopentenyl diphosphate from 1-deoxy-D-xylulose 5-phosphate: step 1/6. Functionally, catalyzes the NADPH-dependent rearrangement and reduction of 1-deoxy-D-xylulose-5-phosphate (DXP) to 2-C-methyl-D-erythritol 4-phosphate (MEP). This is 1-deoxy-D-xylulose 5-phosphate reductoisomerase from Cereibacter sphaeroides (strain ATCC 17025 / ATH 2.4.3) (Rhodobacter sphaeroides).